Here is a 454-residue protein sequence, read N- to C-terminus: Probable DNA primase large subunit (454 aa).

The [4Fe-4S] cluster site is built by C280, C359, C375, and C415.

It belongs to the eukaryotic-type primase large subunit family. In terms of assembly, heterodimer of a small subunit and a large subunit. It depends on [4Fe-4S] cluster as a cofactor.

DNA primase is the polymerase that synthesizes small RNA primers for the Okazaki fragments made during discontinuous DNA replication. This is Probable DNA primase large subunit from Arabidopsis thaliana (Mouse-ear cress).